Reading from the N-terminus, the 227-residue chain is Thymidylate synthase (227 aa).

Residue Arg89–Arg90 coordinates dUMP. The active-site Nucleophile is Cys109. DUMP contacts are provided by residues Arg129–Asp132, Asn140, and His170–Tyr172. Asp132 contacts (6R)-5,10-methylene-5,6,7,8-tetrahydrofolate.

Belongs to the thymidylate synthase family. Bacterial-type ThyA subfamily. As to quaternary structure, homodimer.

It localises to the cytoplasm. It carries out the reaction dUMP + (6R)-5,10-methylene-5,6,7,8-tetrahydrofolate = 7,8-dihydrofolate + dTMP. The protein operates within pyrimidine metabolism; dTTP biosynthesis. Functionally, catalyzes the reductive methylation of 2'-deoxyuridine-5'-monophosphate (dUMP) to 2'-deoxythymidine-5'-monophosphate (dTMP) while utilizing 5,10-methylenetetrahydrofolate (mTHF) as the methyl donor and reductant in the reaction, yielding dihydrofolate (DHF) as a by-product. This enzymatic reaction provides an intracellular de novo source of dTMP, an essential precursor for DNA biosynthesis. This Bacillus atrophaeus protein is Thymidylate synthase.